A 377-amino-acid polypeptide reads, in one-letter code: N5-carboxyaminoimidazole ribonucleotide synthase (377 aa).

Residues Arg93, Lys133, Gly138 to Gln144, Glu175 to Val178, Glu183, His206, and Asn257 to Glu258 contribute to the ATP site. The region spanning Lys97–Cys287 is the ATP-grasp domain.

This sequence belongs to the PurK/PurT family. In terms of assembly, homodimer.

It carries out the reaction 5-amino-1-(5-phospho-beta-D-ribosyl)imidazole + hydrogencarbonate + ATP = 5-carboxyamino-1-(5-phospho-D-ribosyl)imidazole + ADP + phosphate + 2 H(+). It functions in the pathway purine metabolism; IMP biosynthesis via de novo pathway; 5-amino-1-(5-phospho-D-ribosyl)imidazole-4-carboxylate from 5-amino-1-(5-phospho-D-ribosyl)imidazole (N5-CAIR route): step 1/2. Its function is as follows. Catalyzes the ATP-dependent conversion of 5-aminoimidazole ribonucleotide (AIR) and HCO(3)(-) to N5-carboxyaminoimidazole ribonucleotide (N5-CAIR). In Vibrio vulnificus (strain CMCP6), this protein is N5-carboxyaminoimidazole ribonucleotide synthase.